The sequence spans 125 residues: UPF0738 protein GK0828 (125 aa).

Belongs to the UPF0738 family.

The sequence is that of UPF0738 protein GK0828 from Geobacillus kaustophilus (strain HTA426).